The primary structure comprises 355 residues: Sorbitol dehydrogenase (355 aa).

At alanine 2 the chain carries N-acetylalanine. Cysteine 43 is a binding site for Zn(2+). Tyrosine 49 lines the substrate pocket. Residues histidine 68 and glutamate 69 each contribute to the Zn(2+) site. Position 154 (glutamate 154) interacts with substrate. Residues isoleucine 182, aspartate 202, arginine 207, 271 to 273 (VGL), and 295 to 297 (IFR) each bind NAD(+). Arginine 297 and tyrosine 298 together coordinate substrate.

It belongs to the zinc-containing alcohol dehydrogenase family. In terms of assembly, homotetramer. The cofactor is Zn(2+). As to expression, expressed in liver.

It localises to the mitochondrion membrane. Its subcellular location is the cell projection. The protein resides in the cilium. The protein localises to the flagellum. The catalysed reaction is keto-D-fructose + NADH + H(+) = D-sorbitol + NAD(+). Functionally, polyol dehydrogenase that catalyzes the reversible NAD(+)-dependent oxidation of various sugar alcohols. Is active with D-sorbitol (D-glucitol) as substrate, leading to the C2-oxidized product D-fructose. Is a key enzyme in the polyol pathway that interconverts glucose and fructose via sorbitol, which constitutes an important alternate route for glucose metabolism. This is Sorbitol dehydrogenase (SORD) from Gallus gallus (Chicken).